The sequence spans 223 residues: uncharacterized protein (223 aa).

It to M.jannaschii MJ1453.

This is an uncharacterized protein from Methanothermobacter thermautotrophicus (strain ATCC 29096 / DSM 1053 / JCM 10044 / NBRC 100330 / Delta H) (Methanobacterium thermoautotrophicum).